The primary structure comprises 66 residues: MSESGLKEQITGKVEKTKGQVKEGIGEVTEDRKLKNEGKWDKTKGTIKEKVGKVKQKISDGLDNKE.

The tract at residues 1-22 (MSESGLKEQITGKVEKTKGQVK) is disordered. Basic and acidic residues predominate over residues 13–22 (KVEKTKGQVK).

This sequence belongs to the UPF0337 (CsbD) family.

The protein is UPF0337 protein BA_0987/GBAA_0987/BAS0923 of Bacillus anthracis.